Here is a 295-residue protein sequence, read N- to C-terminus: Iron-sulfur cluster carrier protein (295 aa).

38–45 (GKGGVGKS) provides a ligand contact to ATP.

The protein belongs to the Mrp/NBP35 ATP-binding proteins family. Homodimer.

In terms of biological role, binds and transfers iron-sulfur (Fe-S) clusters to target apoproteins. Can hydrolyze ATP. The polypeptide is Iron-sulfur cluster carrier protein (Pyrococcus horikoshii (strain ATCC 700860 / DSM 12428 / JCM 9974 / NBRC 100139 / OT-3)).